The primary structure comprises 254 residues: MVKVILNGCSGKMGSVVSNLAETKFPNVEIVAGIDNNTMAQRSYPIFAKPEDCNVSYDVLLDFSRADALKSLVEFSKKTKKPLILCSTGYTAEDLKFIEESSKEIPLFRSANMSIGINLVNNLLKKVAPVLYENFDIELVERHHNQKVDAPSGTALLLAHTIQDSLNEETKLLYGREGIAKREKNEICVNTVRGGGIIGDHEVIFAGDGEVIEINHKAISRDVFAIGALKACEYMADKTKAGKYSMDDVLQLNF.

NAD(+) contacts are provided by residues 8 to 13 (GCSGKM), D35, 86 to 88 (CST), and 110 to 113 (SANM). Catalysis depends on H143, which acts as the Proton donor/acceptor. Residue H144 participates in (S)-2,3,4,5-tetrahydrodipicolinate binding. The active-site Proton donor is K147. 153-154 (GT) is a binding site for (S)-2,3,4,5-tetrahydrodipicolinate.

This sequence belongs to the DapB family.

The protein resides in the cytoplasm. The enzyme catalyses (S)-2,3,4,5-tetrahydrodipicolinate + NAD(+) + H2O = (2S,4S)-4-hydroxy-2,3,4,5-tetrahydrodipicolinate + NADH + H(+). It catalyses the reaction (S)-2,3,4,5-tetrahydrodipicolinate + NADP(+) + H2O = (2S,4S)-4-hydroxy-2,3,4,5-tetrahydrodipicolinate + NADPH + H(+). Its pathway is amino-acid biosynthesis; L-lysine biosynthesis via DAP pathway; (S)-tetrahydrodipicolinate from L-aspartate: step 4/4. Its function is as follows. Catalyzes the conversion of 4-hydroxy-tetrahydrodipicolinate (HTPA) to tetrahydrodipicolinate. The chain is 4-hydroxy-tetrahydrodipicolinate reductase from Clostridium perfringens (strain SM101 / Type A).